The following is a 92-amino-acid chain: Small ribosomal subunit protein uS19c (92 aa).

This sequence belongs to the universal ribosomal protein uS19 family.

It is found in the plastid. Its subcellular location is the chloroplast. Protein S19 forms a complex with S13 that binds strongly to the 16S ribosomal RNA. The protein is Small ribosomal subunit protein uS19c of Nymphaea alba (White water-lily).